A 585-amino-acid polypeptide reads, in one-letter code: Zinc finger protein 732 (585 aa).

A KRAB domain is found at 4–75 (LTFRDVAIEF…KIHETVAKHP (72 aa)). The segment at 141 to 163 (FQCNVHVKVFSTFSNSNQRRIRH) adopts a C2H2-type 1; degenerate zinc-finger fold. The C2H2-type 2; degenerate zinc finger occupies 167–189 (KHFKECGKSFQKFSDLTQHQGIH). The C2H2-type 3; degenerate zinc finger occupies 195–217 (YTCEECGKDFKWYLIFNEYEIIH). A C2H2-type 4 zinc finger spans residues 223 to 244 (FTCEECGNIFTTSSNFAKHKVH). The segment at 250–272 (YKYEECGKAFNRSSTLTKHKRIH) adopts a C2H2-type 5; degenerate zinc-finger fold. 9 C2H2-type zinc fingers span residues 278–300 (FTCEECGKIITSSSNVAKHKKIH), 306–328 (YKCQECGKVFNRSTTLTKHNRIH), 334–356 (YTCEECGKAFSRSSVLNEHKRIH), 362–384 (YKCEQCGKAFRQSATLNKHKSIH), 390–412 (YTCEECGKAFSRFTTLNEHKRIH), 418–440 (HKCEECGKAFGWSTDLNKHKIIH), 446–468 (YKCEECGKAFGWSAYLSKHKKIH), 474–496 (YRCEECGKAFLCSRALNKHKTIH), and 502–524 (YECEECGKAFGWSTYLSKHKKIH). The C2H2-type 15; degenerate zinc-finger motif lies at 530-552 (YRCEECGKAFRRSRVLNKYKTIH). The C2H2-type 16; degenerate zinc finger occupies 558-580 (PKCKGCGKAFKWSSYLNQHNKIY).

The protein belongs to the krueppel C2H2-type zinc-finger protein family.

Its subcellular location is the nucleus. May be involved in transcriptional regulation. The sequence is that of Zinc finger protein 732 (ZNF732) from Homo sapiens (Human).